The chain runs to 153 residues: UPF0756 membrane protein NT01CX_1209 (153 aa).

The next 4 membrane-spanning stretches (helical) occupy residues 5–25 (IILL…LGIA), 45–65 (ENHF…IPII), 83–103 (IVCF…VGFL), and 113–133 (IILG…GPLI).

Belongs to the UPF0756 family.

The protein localises to the cell membrane. This chain is UPF0756 membrane protein NT01CX_1209, found in Clostridium novyi (strain NT).